Reading from the N-terminus, the 377-residue chain is Mitochondrial pyrimidine nucleotide transporter RIM2 (377 aa).

Solcar repeat units follow at residues Val-50–Met-163, Glu-173–Leu-262, and Lys-286–Leu-375. 6 helical membrane passes run Trp-53–Phe-73, Gly-131–Ser-151, Leu-179–Ile-199, Gly-238–Gln-258, Lys-286–Thr-306, and Met-347–Thr-368.

This sequence belongs to the mitochondrial carrier (TC 2.A.29) family.

It is found in the mitochondrion inner membrane. The catalysed reaction is 5-methyl-UTP(out) + UTP(in) = 5-methyl-UTP(in) + UTP(out). Its function is as follows. Mitochondrial transporter that imports/exports pyrimidine nucleotides into and from mitochondria. Selectively transports uridine, thymidine, and cytosine (deoxy)nucleoside di- and triphosphates by an antiport mechanism. Also transports, with lower efficiency, uridine, thymidine, and cytosine (deoxy)nucleoside monophosphates as well as guanosine (deoxy)nucleoside di- and triphosphate. May import (deoxy)nucleoside triphosphates in exchange for intramitochondrial (deoxy)nucleoside monophosphates, thus providing precursors necessary for de novo synthesis of mitochondrial DNA and RNA while exporting products of their catabolism. Mediates the transport of iron and other divalent metal ions like copper and zinc across the mitochondrial inner membrane in a pyrimidine nucleotide-dependent fashion. Catalyzes the co-import of pyrimidine nucleotides and divalent metal ions including ferrous iron. Participates in mitochondrial genome maintenance, regulation of mitochondrial membrane potential and mitochondrial respiration. This is Mitochondrial pyrimidine nucleotide transporter RIM2 (RIM2) from Saccharomyces cerevisiae (strain ATCC 204508 / S288c) (Baker's yeast).